Reading from the N-terminus, the 333-residue chain is MHKHRKPTEADVTPESLFYQRRRILKALGISAAALSLPFSAQADLLAWFKGTDKPKAPPGKPLTFSQPADWKLDLPLTPEDKVTGYNNFYEFGLDKADPAANAGGLKTEGWTIKIDGDVAKPLTLDIDDLLKRFPLEERIYRFRCVEAWSMVIPWVGFELAKLIKFAEPTSNARYVAFQTLYDPEQMPGQKDRFMGGGLDYPYVEGLRMDEAMNPLALLAVGVYGKTLPPQNGAPIRLVTPWKYGFKNIKSIVHIRFTREKPPCTWNLAAPDEYGFYANVNPHVDHPRWSQATERVIGSGGLLNVERQPTLLFNGYAEQVASLYRGLNLRDNF.

A signal peptide (tat-type signal) is located at residues 1 to 43 (MHKHRKPTEADVTPESLFYQRRRILKALGISAAALSLPFSAQA). Mo-molybdopterin-binding positions include asparagine 87, 90 to 91 (YE), cysteine 145, threonine 180, asparagine 232, arginine 237, and 248 to 250 (NIK).

Belongs to the MsrP family. Heterodimer of a catalytic subunit (MsrP) and a heme-binding subunit (MsrQ). The cofactor is Mo-molybdopterin. Predicted to be exported by the Tat system. The position of the signal peptide cleavage has not been experimentally proven.

The protein localises to the periplasm. The enzyme catalyses L-methionyl-[protein] + a quinone + H2O = L-methionyl-(S)-S-oxide-[protein] + a quinol. The catalysed reaction is L-methionyl-[protein] + a quinone + H2O = L-methionyl-(R)-S-oxide-[protein] + a quinol. Functionally, part of the MsrPQ system that repairs oxidized periplasmic proteins containing methionine sulfoxide residues (Met-O), using respiratory chain electrons. Thus protects these proteins from oxidative-stress damage caused by reactive species of oxygen and chlorine generated by the host defense mechanisms. MsrPQ is essential for the maintenance of envelope integrity under bleach stress, rescuing a wide series of structurally unrelated periplasmic proteins from methionine oxidation. The catalytic subunit MsrP is non-stereospecific, being able to reduce both (R-) and (S-) diastereoisomers of methionine sulfoxide. The polypeptide is Protein-methionine-sulfoxide reductase catalytic subunit MsrP (Pectobacterium carotovorum subsp. carotovorum (strain PC1)).